The sequence spans 1320 residues: Protein brunelleschi (1320 aa).

The interval 313–411 is disordered; the sequence is HRNSSLQEAG…IPGHQRNGDL (99 aa). Residues 314–327 are compositionally biased toward polar residues; it reads RNSSLQEAGTSPLK. Ser317 is modified (phosphoserine). Phosphothreonine is present on Thr329. The span at 329 to 340 shows a compositional bias: basic and acidic residues; the sequence is TPEKWRASDATK. A compositionally biased stretch (polar residues) spans 345-361; the sequence is SDATANNVDSNQPQQRV. Residues 362-400 show a composition bias toward low complexity; that stretch reads TSNSSSCSSVSSLVTTATNSSASDTPTTSSSSTSTISAA. Ser672 is subject to Phosphoserine. Positions 923–954 are disordered; sequence VSTSGHASLPSRVGSPHHRRNEPQNSSFRSTI. A compositionally biased stretch (polar residues) spans 945-954; that stretch reads PQNSSFRSTI.

Belongs to the NIBP family. In terms of assembly, may be part of the multisubunit TRAPP (transport protein particle) complex.

The protein localises to the cytoplasm. The protein resides in the golgi apparatus. Functionally, cooperates with Rab11 and fwd/PI4K to mediate the flow of membrane through the Golgi, which is required to support cleavage furrow ingression, therefore promoting cytokinesis in male meiotic cells. The chain is Protein brunelleschi from Drosophila melanogaster (Fruit fly).